The primary structure comprises 95 residues: ESAT-6-like protein EsxC (95 aa).

Belongs to the WXG100 family. ESAT-6 subfamily.

It localises to the secreted. The polypeptide is ESAT-6-like protein EsxC (Mycolicibacterium paratuberculosis (strain ATCC BAA-968 / K-10) (Mycobacterium paratuberculosis)).